Reading from the N-terminus, the 278-residue chain is MIQEFIQGLHDFHFLQNALITAIVIGVVAGAVGCFIILRGMSLMGDAISHAVLPGVALSFILGINFFIGAITFGLLASIIITYIKGNSIIKSDTAIGITFSSFLALGIILISVAKSSTDLFHILFGNILAVQDLDMWISIGVGILVLLVISIFFKQLLLTSFDPLLAQAMGMKVNFYHYLLMILLTLVSVTAMQSVGTILIVAMLITPAATAYLYAKSLKTMILLSSALGAGASVLGLFIGYSFNVAAGSSIVLTSALIFLVSFFIAPKQRYLKRKVK.

Helical transmembrane passes span Ala-18–Leu-38, Ile-61–Ile-81, Thr-94–Ala-114, Leu-134–Phe-154, Val-174–Gln-194, Val-196–Ala-216, Met-222–Tyr-242, and Val-246–Ile-266.

This sequence belongs to the ABC-3 integral membrane protein family. The complex is composed of two ATP-binding proteins (ScaC), two transmembrane proteins (ScaB) and a solute-binding protein (ScaA).

It is found in the cell membrane. Part of the high-affinity ABC transporter complex ScaABC involved in manganese import. Probably responsible for the translocation of the substrate across the membrane. Essential for growth under Mn(2+)-limiting conditions. The polypeptide is Manganese import system permease protein ScaB (Streptococcus gordonii).